A 394-amino-acid polypeptide reads, in one-letter code: Ceramide glucosyltransferase (394 aa).

At 1 to 10 (MALLDLALEG) the chain is on the lumenal side. Residues 11–32 (MAVFGFVLFLVLWLMHFMAIIY) form a helical membrane-spanning segment. The Cytoplasmic segment spans residues 33–195 (TRLHLNKKAT…QVYFGTSHPR (163 aa)). Position 92 (Asp92) is a short sequence motif, D1. Position 117 is an N6-acetyllysine (Lys117). Residue Asp144 is a short sequence motif, D2. Residues 196–215 (YYISANVTGFKCVTGMSCLM) traverse the membrane as a helical segment. At 216–287 (RKDVLDQAGG…KLRINMLPAT (72 aa)) the chain is on the lumenal side. Position 236 (Asp236) is a short sequence motif, D3. Asp236 serves as the catalytic Proton acceptor. Positions 272-276 (RMIRW) match the (Q/R)XXRW motif. Residues 288-304 (IICEPISECFVASLIIG) form a helical membrane-spanning segment. Residues 305-309 (WAAHH) lie on the Cytoplasmic side of the membrane. The chain crosses the membrane as a helical span at residues 310–328 (VFRWDIMVFFMCHCLAWFI). At 329-348 (FDYIQLRGVQGGTLCFSKLD) the chain is on the lumenal side. The chain crosses the membrane as a helical span at residues 349-369 (YAVAWFIRESMTIYIFLSALW). At 370-394 (DPTISWRTGRYRLRCGGTAEEILDV) the chain is on the cytoplasmic side.

The protein belongs to the glycosyltransferase 2 family. Interacts with RTN1; regulates the ceramide glucosyltransferase activity of UGCG. Found in all tissues examined.

It localises to the golgi apparatus membrane. The enzyme catalyses an N-acylsphing-4-enine + UDP-alpha-D-glucose = a beta-D-glucosyl-(1&lt;-&gt;1')-N-acylsphing-4-enine + UDP + H(+). The catalysed reaction is UDP-alpha-D-xylose + an N-acylsphing-4-enine = a beta-D-xylosyl-(1&lt;-&gt;1')-N-acylsphing-4-enine + UDP + H(+). It catalyses the reaction N-(9Z-octadecenoyl)-sphing-4-enine + UDP-alpha-D-xylose = beta-D-xylosyl-(1&lt;-&gt;1')-N-(9Z-octadecenoyl)-sphing-4-enine + UDP + H(+). The protein operates within lipid metabolism; sphingolipid metabolism. Participates in the initial step of the glucosylceramide-based glycosphingolipid/GSL synthetic pathway at the cytosolic surface of the Golgi. Catalyzes the transfer of glucose from UDP-glucose to ceramide to produce glucosylceramide/GlcCer (such as beta-D-glucosyl-(1&lt;-&gt;1')-N-acylsphing-4-enine). GlcCer is the core component of glycosphingolipids/GSLs, amphipathic molecules consisting of a ceramide lipid moiety embedded in the outer leaflet of the membrane, linked to one of hundreds of different externally oriented oligosaccharide structures. Glycosphingolipids are essential components of membrane microdomains that mediate membrane trafficking and signal transduction, implicated in many fundamental cellular processes, including growth, differentiation, migration, morphogenesis, cell-to-cell and cell-to-matrix interactions. They are required for instance in the proper development and functioning of the nervous system. As an example of their role in signal transduction, they regulate the leptin receptor/LEPR in the leptin-mediated signaling pathway. They also play an important role in the establishment of the skin barrier regulating keratinocyte differentiation and the proper assembly of the cornified envelope. The biosynthesis of GSLs is also required for the proper intestinal endocytic uptake of nutritional lipids. Catalyzes the synthesis of xylosylceramide/XylCer (such as beta-D-xylosyl-(1&lt;-&gt;1')-N-acylsphing-4-enine) using UDP-Xyl as xylose donor. This is Ceramide glucosyltransferase from Homo sapiens (Human).